The sequence spans 508 residues: Photosystem II CP47 reaction center protein (508 aa).

6 consecutive transmembrane segments (helical) span residues 21–36 (SVHI…WAGS), 101–115 (IVFS…IWHW), 140–156 (GIHL…FGAF), 203–218 (IAAG…FHLS), 237–252 (VLSS…AFVV), and 457–472 (SFAL…HGAR).

The protein belongs to the PsbB/PsbC family. PsbB subfamily. PSII is composed of 1 copy each of membrane proteins PsbA, PsbB, PsbC, PsbD, PsbE, PsbF, PsbH, PsbI, PsbJ, PsbK, PsbL, PsbM, PsbT, PsbX, PsbY, PsbZ, Psb30/Ycf12, at least 3 peripheral proteins of the oxygen-evolving complex and a large number of cofactors. It forms dimeric complexes. The cofactor is Binds multiple chlorophylls. PSII binds additional chlorophylls, carotenoids and specific lipids..

The protein localises to the plastid. Its subcellular location is the chloroplast thylakoid membrane. One of the components of the core complex of photosystem II (PSII). It binds chlorophyll and helps catalyze the primary light-induced photochemical processes of PSII. PSII is a light-driven water:plastoquinone oxidoreductase, using light energy to abstract electrons from H(2)O, generating O(2) and a proton gradient subsequently used for ATP formation. In Gossypium barbadense (Sea Island cotton), this protein is Photosystem II CP47 reaction center protein.